The chain runs to 269 residues: Major pollen allergen Pha a 1 (269 aa).

The signal sequence occupies residues 1-29 (MMKMVCSSSSSSLLVVAALLAVFVGSAQG). N-linked (GlcNAc...) asparagine glycosylation occurs at asparagine 38. The Expansin-like EG45 domain occupies 67–173 (GGACGYKDVD…RRVKCKYPDG (107 aa)). An Expansin-like CBD domain is found at 187–268 (NYLALLVKYV…GWKADTHDAS (82 aa)).

This sequence belongs to the expansin family. Expansin B subfamily.

The protein localises to the secreted. The chain is Major pollen allergen Pha a 1 from Phalaris aquatica (Canary grass).